Consider the following 380-residue polypeptide: Acetylornithine deacetylase (380 aa).

A Zn(2+)-binding site is contributed by H79. D81 is a catalytic residue. D109 contacts Zn(2+). E139 is a catalytic residue. Positions 140, 164, and 351 each coordinate Zn(2+).

Belongs to the peptidase M20A family. ArgE subfamily. In terms of assembly, homodimer. The cofactor is Zn(2+). Requires Co(2+) as cofactor. Glutathione serves as cofactor.

The protein localises to the cytoplasm. It carries out the reaction N(2)-acetyl-L-ornithine + H2O = L-ornithine + acetate. The protein operates within amino-acid biosynthesis; L-arginine biosynthesis; L-ornithine from N(2)-acetyl-L-ornithine (linear): step 1/1. Its function is as follows. Catalyzes the hydrolysis of the amide bond of N(2)-acetylated L-amino acids. Cleaves the acetyl group from N-acetyl-L-ornithine to form L-ornithine, an intermediate in L-arginine biosynthesis pathway, and a branchpoint in the synthesis of polyamines. The polypeptide is Acetylornithine deacetylase (Myxococcus xanthus).